A 327-amino-acid chain; its full sequence is MTMDSGADNQQSGDAAVTEAESQQMTVQAQPQIATLAQVSMPAAHATSSAPTVTLVQLPNGQTVQVHGVIQAAQPSVIQSPQVQTVQISTIAESEDSQESVDSVTDSQKRREILSRRPSYRKILNDLSSDAPGVPRIEEEKSEEETSAPAITTVTVPTPIYQTSSGQYIAITQGGAIQLANNGTDGVQGLQTLTMTNAAATQPGTTILQYAQTTDGQQILVPSNQVVVQAASGDVQTYQIRTAPTSTIAPGVVMASSPALPTQPAEEAARKREVRLMKNREAARECRRKKKEYVKCLENRVAVLENQNKTLIEELKALKDLYCHKSD.

2 disordered regions span residues 1-29 (MTMDSGADNQQSGDAAVTEAESQQMTVQA) and 94-113 (SEDSQESVDSVTDSQKRREI). Residues 8 to 146 (DNQQSGDAAV…IEEEKSEEET (139 aa)) form the KID domain. The span at 20–29 (AESQQMTVQA) shows a compositional bias: polar residues. Ser-119 bears the Phosphoserine; by CaMK1, CaMK2, CaMK4, PKB/AKT1 or PKB/AKT2, RPS6KA3, RPS6KA4, RPS6KA5 and SGK1 mark. A Glycyl lysine isopeptide (Lys-Gly) (interchain with G-Cter in SUMO2) cross-link involves residue Lys-122. A disordered region spans residues 126–149 (DLSSDAPGVPRIEEEKSEEETSAP). Ser-128 carries the post-translational modification Phosphoserine; by CaMK2. Position 257 is a phosphoserine; by HIPK2 (Ser-257). The bZIP domain occupies 269 to 327 (ARKREVRLMKNREAARECRRKKKEYVKCLENRVAVLENQNKTLIEELKALKDLYCHKSD). Positions 270-295 (RKREVRLMKNREAARECRRKKKEYVK) are basic motif. Residues Lys-271 and Lys-290 each participate in a glycyl lysine isopeptide (Lys-Gly) (interchain with G-Cter in SUMO1) cross-link. The segment at 297 to 318 (LENRVAVLENQNKTLIEELKAL) is leucine-zipper.

Belongs to the bZIP family. Interacts with PPRC1. Binds DNA as a dimer. This dimer is stabilized by magnesium ions. Interacts, through the bZIP domain, with the coactivators CRTC1/TORC1, CRTC2/TORC2 and CRTC3/TORC3. When phosphorylated on Ser-119, binds CREBBP. Interacts with CREBL2; regulates CREB1 phosphorylation, stability and transcriptional activity. Interacts (phosphorylated form) with TOX3. Interacts with ARRB1. Binds to HIPK2. Interacts with SGK1. Interacts with TSSK4; this interaction facilitates phosphorylation on Ser-119. Forms a complex with KMT2A and CREBBP. Interacts with TOX4; CREB1 is required for full induction of TOX4-dependent activity and the interaction is increased by cAMP and inhibited by insulin. In terms of processing, phosphorylation of Ser-119 allows CREBBP binding. Stimulated by phosphorylation. Phosphorylation of both Ser-128 and Ser-119 in the SCN regulates the activity of CREB and participate in circadian rhythm generation. Phosphorylated upon calcium influx by CaMK4 and CaMK2 on Ser-119. CaMK4 is much more potent than CaMK2 in activating CREB. Phosphorylated by CaMK2 on Ser-128. Phosphorylation of Ser-128 blocks CREB-mediated transcription even when Ser-119 is phosphorylated. Phosphorylated by CaMK1. Phosphorylation of Ser-257 by HIPK2 in response to genotoxic stress promotes CREB1 activity, facilitating the recruitment of the coactivator CBP. Phosphorylated at Ser-119 by RPS6KA3, RPS6KA4 and RPS6KA5 in response to mitogenic or stress stimuli. CREBL2 positively regulates phosphorylation at Ser-119 thereby stimulating CREB1 transcriptional activity. In liver, phosphorylation is induced by fasting or glucagon in a circadian fashion. Phosphorylated by TSSK4 on Ser-119. Post-translationally, sumoylated with SUMO1. Sumoylation on Lys-290, but not on Lys-271, is required for nuclear localization of this protein. Sumoylation is enhanced under hypoxia, promoting nuclear localization and stabilization.

The protein resides in the nucleus. Functionally, phosphorylation-dependent transcription factor that stimulates transcription upon binding to the DNA cAMP response element (CRE), a sequence present in many viral and cellular promoters. Transcription activation is enhanced by the TORC coactivators which act independently of Ser-119 phosphorylation. Involved in different cellular processes including the synchronization of circadian rhythmicity and the differentiation of adipose cells. Regulates the expression of apoptotic and inflammatory response factors in cardiomyocytes in response to ERFE-mediated activation of AKT signaling. The chain is Cyclic AMP-responsive element-binding protein 1 (Creb1) from Rattus norvegicus (Rat).